A 447-amino-acid polypeptide reads, in one-letter code: Putative branched-chain amino acid carrier protein SERP0977 (447 aa).

Helical transmembrane passes span 5–25 (TWIIGFTLFAMFFGAGNLIFP), 40–60 (ILAFALTGIGLPLLGVVVGAL), 74–94 (PRFSLIFLIIIYLTIGPLFAI), 114–134 (GNLALFIFTVIYFLIVLYLCL), 143–163 (IGSLLTPLLLITIVAMIIKGF), 193–213 (GYLTMDAIASIAFSMIVVNAI), 229–249 (IIAGLIAAIALVFIYISLGYI), 290–310 (LLGIIVSLACLTTACGLIVSV), 317–337 (IIPKIPYKVFVVFFILVSFIL), 350–370 (VPVLSVIYPVAITVILLILIA), 382–402 (IPLIIVAIESILSLITTQGWI), and 417–437 (LEWFPIAVVATLVGYMISYFV).

This sequence belongs to the branched chain amino acid transporter family.

The protein localises to the cell membrane. In terms of biological role, component of the transport system for branched-chain amino acids (leucine, isoleucine and valine), which is coupled to a proton motive force. This Staphylococcus epidermidis (strain ATCC 35984 / DSM 28319 / BCRC 17069 / CCUG 31568 / BM 3577 / RP62A) protein is Putative branched-chain amino acid carrier protein SERP0977.